The chain runs to 412 residues: NADH-quinone oxidoreductase subunit D (412 aa).

Belongs to the complex I 49 kDa subunit family. As to quaternary structure, NDH-1 is composed of 14 different subunits. Subunits NuoB, C, D, E, F, and G constitute the peripheral sector of the complex.

It is found in the cell inner membrane. It carries out the reaction a quinone + NADH + 5 H(+)(in) = a quinol + NAD(+) + 4 H(+)(out). Functionally, NDH-1 shuttles electrons from NADH, via FMN and iron-sulfur (Fe-S) centers, to quinones in the respiratory chain. The immediate electron acceptor for the enzyme in this species is believed to be a menaquinone. Couples the redox reaction to proton translocation (for every two electrons transferred, four hydrogen ions are translocated across the cytoplasmic membrane), and thus conserves the redox energy in a proton gradient. The polypeptide is NADH-quinone oxidoreductase subunit D (Flavobacterium johnsoniae (strain ATCC 17061 / DSM 2064 / JCM 8514 / BCRC 14874 / CCUG 350202 / NBRC 14942 / NCIMB 11054 / UW101) (Cytophaga johnsonae)).